The following is a 71-amino-acid chain: Large ribosomal subunit protein bL31 (71 aa).

Residues C16, C18, C37, and C40 each coordinate Zn(2+).

Belongs to the bacterial ribosomal protein bL31 family. Type A subfamily. Part of the 50S ribosomal subunit. Zn(2+) is required as a cofactor.

Functionally, binds the 23S rRNA. The protein is Large ribosomal subunit protein bL31 of Pectobacterium atrosepticum (strain SCRI 1043 / ATCC BAA-672) (Erwinia carotovora subsp. atroseptica).